The sequence spans 117 residues: UPF0342 protein BcerKBAB4_0767 (117 aa).

The protein belongs to the UPF0342 family.

This Bacillus mycoides (strain KBAB4) (Bacillus weihenstephanensis) protein is UPF0342 protein BcerKBAB4_0767.